The chain runs to 620 residues: Chaperone protein HscA homolog (620 aa).

The protein belongs to the heat shock protein 70 family.

Chaperone involved in the maturation of iron-sulfur cluster-containing proteins. Has a low intrinsic ATPase activity which is markedly stimulated by HscB. The sequence is that of Chaperone protein HscA homolog from Pseudomonas putida (strain ATCC 47054 / DSM 6125 / CFBP 8728 / NCIMB 11950 / KT2440).